A 352-amino-acid polypeptide reads, in one-letter code: Ion-translocating oxidoreductase complex subunit D (352 aa).

The next 5 helical transmembrane spans lie at 20–40 (IMLL…WFFG), 42–62 (GTLV…ALVL), 78–109 (ALLT…VIIA), 123–143 (PAMI…TSWL), and 148–168 (IAVN…GHTA). FMN phosphoryl threonine is present on Thr187. Transmembrane regions (helical) follow at residues 214–234 (ILAG…GVWL), 242–262 (WHIP…GWLF), 267–287 (LAAP…FFIL), 301–321 (LIFG…GGYP), and 322–342 (DGVA…DYYT).

It belongs to the NqrB/RnfD family. In terms of assembly, the complex is composed of six subunits: RsxA, RsxB, RsxC, RsxD, RsxE and RsxG. FMN serves as cofactor.

Its subcellular location is the cell inner membrane. Its function is as follows. Part of a membrane-bound complex that couples electron transfer with translocation of ions across the membrane. Required to maintain the reduced state of SoxR. This Escherichia coli O6:H1 (strain CFT073 / ATCC 700928 / UPEC) protein is Ion-translocating oxidoreductase complex subunit D.